We begin with the raw amino-acid sequence, 64 residues long: Large ribosomal subunit protein bL28 (64 aa).

Residues 1-21 are disordered; it reads MAKKDQLTLRGPLYGNNRSHS.

The protein belongs to the bacterial ribosomal protein bL28 family.

In Mycoplasma genitalium (strain ATCC 33530 / DSM 19775 / NCTC 10195 / G37) (Mycoplasmoides genitalium), this protein is Large ribosomal subunit protein bL28.